Consider the following 374-residue polypeptide: Queuine tRNA-ribosyltransferase (374 aa).

The active-site Proton acceptor is the D89. Substrate contacts are provided by residues 89 to 93, D143, Q185, and G212; that span reads DSGGF. Positions 243–249 are RNA binding; the sequence is GVGKPED. The active-site Nucleophile is D262. Residues 267–271 are RNA binding; important for wobble base 34 recognition; sequence TRNAR. Zn(2+) is bound by residues C300, C302, C305, and H331.

This sequence belongs to the queuine tRNA-ribosyltransferase family. As to quaternary structure, homodimer. Within each dimer, one monomer is responsible for RNA recognition and catalysis, while the other monomer binds to the replacement base PreQ1. Zn(2+) serves as cofactor.

It carries out the reaction 7-aminomethyl-7-carbaguanine + guanosine(34) in tRNA = 7-aminomethyl-7-carbaguanosine(34) in tRNA + guanine. Its pathway is tRNA modification; tRNA-queuosine biosynthesis. Functionally, catalyzes the base-exchange of a guanine (G) residue with the queuine precursor 7-aminomethyl-7-deazaguanine (PreQ1) at position 34 (anticodon wobble position) in tRNAs with GU(N) anticodons (tRNA-Asp, -Asn, -His and -Tyr). Catalysis occurs through a double-displacement mechanism. The nucleophile active site attacks the C1' of nucleotide 34 to detach the guanine base from the RNA, forming a covalent enzyme-RNA intermediate. The proton acceptor active site deprotonates the incoming PreQ1, allowing a nucleophilic attack on the C1' of the ribose to form the product. After dissociation, two additional enzymatic reactions on the tRNA convert PreQ1 to queuine (Q), resulting in the hypermodified nucleoside queuosine (7-(((4,5-cis-dihydroxy-2-cyclopenten-1-yl)amino)methyl)-7-deazaguanosine). The protein is Queuine tRNA-ribosyltransferase of Saccharophagus degradans (strain 2-40 / ATCC 43961 / DSM 17024).